Here is a 446-residue protein sequence, read N- to C-terminus: Tubulin alpha-2 chain (446 aa).

Positions 1–4 (MREC) match the MREC motif motif. GTP-binding residues include Gln11, Glu68, Ser137, Gly141, Thr142, Ser176, Asn203, and Asn225. A Mg(2+)-binding site is contributed by Glu68. Residue Glu251 is part of the active site.

Belongs to the tubulin family. As to quaternary structure, dimer of alpha and beta chains. A typical microtubule is a hollow water-filled tube with an outer diameter of 25 nm and an inner diameter of 15 nM. Alpha-beta heterodimers associate head-to-tail to form protofilaments running lengthwise along the microtubule wall with the beta-tubulin subunit facing the microtubule plus end conferring a structural polarity. Microtubules usually have 13 protofilaments but different protofilament numbers can be found in some organisms and specialized cells. Requires Mg(2+) as cofactor. In terms of processing, some glutamate residues at the C-terminus are polyglycylated, resulting in polyglycine chains on the gamma-carboxyl group. Glycylation is mainly limited to tubulin incorporated into axonemes (cilia and flagella) whereas glutamylation is prevalent in neuronal cells, centrioles, axonemes, and the mitotic spindle. Both modifications can coexist on the same protein on adjacent residues, and lowering polyglycylation levels increases polyglutamylation, and reciprocally. The precise function of polyglycylation is still unclear. Post-translationally, some glutamate residues at the C-terminus are polyglutamylated, resulting in polyglutamate chains on the gamma-carboxyl group. Polyglutamylation plays a key role in microtubule severing by spastin (SPAST). SPAST preferentially recognizes and acts on microtubules decorated with short polyglutamate tails: severing activity by SPAST increases as the number of glutamates per tubulin rises from one to eight, but decreases beyond this glutamylation threshold. As to expression, testis specific.

It is found in the cytoplasm. It localises to the cytoskeleton. It carries out the reaction GTP + H2O = GDP + phosphate + H(+). In terms of biological role, tubulin is the major constituent of microtubules, a cylinder consisting of laterally associated linear protofilaments composed of alpha- and beta-tubulin heterodimers. Microtubules grow by the addition of GTP-tubulin dimers to the microtubule end, where a stabilizing cap forms. Below the cap, tubulin dimers are in GDP-bound state, owing to GTPase activity of alpha-tubulin. The protein is Tubulin alpha-2 chain of Gallus gallus (Chicken).